The primary structure comprises 470 residues: 3-isopropylmalate dehydratase large subunit (470 aa).

The [4Fe-4S] cluster site is built by C351, C411, and C414.

The protein belongs to the aconitase/IPM isomerase family. LeuC type 1 subfamily. In terms of assembly, heterodimer of LeuC and LeuD. It depends on [4Fe-4S] cluster as a cofactor.

It carries out the reaction (2R,3S)-3-isopropylmalate = (2S)-2-isopropylmalate. It functions in the pathway amino-acid biosynthesis; L-leucine biosynthesis; L-leucine from 3-methyl-2-oxobutanoate: step 2/4. Catalyzes the isomerization between 2-isopropylmalate and 3-isopropylmalate, via the formation of 2-isopropylmaleate. This is 3-isopropylmalate dehydratase large subunit from Rhodopseudomonas palustris (strain BisB5).